Consider the following 492-residue polypeptide: MLLLGVLLLTVLAGARLLWGKWKLRGLHLPPLVPGCLHLLQPDLPLHLLGLTQKLGPIYRLRLGLQDVVVLNSKRTIEEAMVRKWVDFAGRPQTPSYKLVSLHHQDLSLGDYSLLWKAHKKLTRSALLLGIRSSMEPLVEQLTQEFCERMRAQAGTPVAIQKEFSLLTCAIICHLTFGDKEDTLVHTFHDCVQDLMRTWEHWSIQMLDIIPFLRFFPNPGLWRLKRALENRDHIVEKQLRQHKESMVAGQWRDMTDYMLQRVGRLRAEEGCGQLLEGHVHMSVVDLFIGGTETTATTLSWAVAFLLHHPEIQQRLQEELDRELGPGASGSRIPYRDPTRLPLLSATVAEVLRLRPVVPLALPHCTTRPSSISGYDIPEGMVVIPNLQGAHLDETVWERPQEFRPDRFLVPGASPRVLAFGCGARVCLGEPLARLELLVVLAQLLRAFTLMPAAGTLPSLRPRARCGVNLSMQPFQVQLQPRGAGVLGRGQHP.

Positions 91 and 120 each coordinate heme b. Residue Arg-231 coordinates 17alpha-hydroxyprogesterone. Position 231 (Arg-231) interacts with progesterone. 3 residues coordinate heme b: His-363, Arg-424, and Cys-426.

This sequence belongs to the cytochrome P450 family. It depends on heme b as a cofactor.

It is found in the endoplasmic reticulum membrane. The protein resides in the microsome membrane. It carries out the reaction 17alpha-hydroxyprogesterone + reduced [NADPH--hemoprotein reductase] + O2 = 11-deoxycortisol + oxidized [NADPH--hemoprotein reductase] + H2O + H(+). The catalysed reaction is progesterone + reduced [NADPH--hemoprotein reductase] + O2 = 21-hydroxyprogesterone + oxidized [NADPH--hemoprotein reductase] + H2O + H(+). Specifically catalyzes the 21-hydroxylation of steroids. Required for the adrenal synthesis of mineralocorticoids and glucocorticoids. The sequence is that of Steroid 21-hydroxylase (CYP21) from Canis lupus familiaris (Dog).